The primary structure comprises 447 residues: ATP-dependent protease ATPase subunit HslU (447 aa).

ATP is bound by residues isoleucine 18, 60–65 (GVGKTE), aspartate 260, glutamate 325, and arginine 397.

The protein belongs to the ClpX chaperone family. HslU subfamily. In terms of assembly, a double ring-shaped homohexamer of HslV is capped on each side by a ring-shaped HslU homohexamer. The assembly of the HslU/HslV complex is dependent on binding of ATP.

It is found in the cytoplasm. Functionally, ATPase subunit of a proteasome-like degradation complex; this subunit has chaperone activity. The binding of ATP and its subsequent hydrolysis by HslU are essential for unfolding of protein substrates subsequently hydrolyzed by HslV. HslU recognizes the N-terminal part of its protein substrates and unfolds these before they are guided to HslV for hydrolysis. This is ATP-dependent protease ATPase subunit HslU from Paraburkholderia phymatum (strain DSM 17167 / CIP 108236 / LMG 21445 / STM815) (Burkholderia phymatum).